The chain runs to 218 residues: Glutathione S-transferase Mu 1 (218 aa).

Positions proline 2–glycine 88 constitute a GST N-terminal domain. Glutathione is bound at residue tyrosine 7–tryptophan 8. Phosphothreonine is present on threonine 34. Glutathione contacts are provided by residues arginine 43–tryptophan 46, lysine 50, and asparagine 59–leucine 60. Serine 67 is subject to Phosphoserine. Glutamine 72–serine 73 is a binding site for glutathione. Positions threonine 90–isoleucine 208 constitute a GST C-terminal domain. Residue tyrosine 116 participates in substrate binding. A Phosphoserine modification is found at serine 210.

As to quaternary structure, homodimer.

The protein resides in the cytoplasm. The catalysed reaction is RX + glutathione = an S-substituted glutathione + a halide anion + H(+). It catalyses the reaction prostaglandin A2 + glutathione = prostaglandin A2-S-(R)-glutathione. It carries out the reaction prostaglandin J2 + glutathione = prostaglandin J2-S-(R)-glutathione. The enzyme catalyses prostaglandin J2 + glutathione = prostaglandin J2-S-(S)-glutathione. The catalysed reaction is prostaglandin A2 + glutathione = prostaglandin A2-S-(S)-glutathione. It catalyses the reaction 11(S)-hydroxy-14(S),15(S)-epoxy-(5Z,8Z,12E)-eicosatrienoate + glutathione = (11S,15S)-dihydroxy-14(R)-S-glutathionyl-(5Z,8Z,12E)-eicosatrienoate. In terms of biological role, conjugation of reduced glutathione to a wide number of exogenous and endogenous hydrophobic electrophiles. Involved in the formation of glutathione conjugates of both prostaglandin A2 (PGA2) and prostaglandin J2 (PGJ2). Participates in the formation of novel hepoxilin regioisomers. This chain is Glutathione S-transferase Mu 1, found in Mus musculus (Mouse).